Consider the following 61-residue polypeptide: Large ribosomal subunit protein uL30 (61 aa).

This sequence belongs to the universal ribosomal protein uL30 family. In terms of assembly, part of the 50S ribosomal subunit.

This chain is Large ribosomal subunit protein uL30, found in Bordetella avium (strain 197N).